Consider the following 163-residue polypeptide: MALNLQDKQAIVAEVNEAAKGALSAVIADSRGVTVDKMTELRKAAREAGVSMRVVRNTLLRRAVEGTEFECLTDTFTGPTLIAFSNEHPGAAARLFKDFAKANDKFEIKGAAFEGKIQDIDFLATLPTYEEAIARLMGTMKEAAAGKLVRTFAALRDKLQEAA.

It belongs to the universal ribosomal protein uL10 family. Part of the ribosomal stalk of the 50S ribosomal subunit. The N-terminus interacts with L11 and the large rRNA to form the base of the stalk. The C-terminus forms an elongated spine to which L12 dimers bind in a sequential fashion forming a multimeric L10(L12)X complex.

Forms part of the ribosomal stalk, playing a central role in the interaction of the ribosome with GTP-bound translation factors. This chain is Large ribosomal subunit protein uL10, found in Actinobacillus succinogenes (strain ATCC 55618 / DSM 22257 / CCUG 43843 / 130Z).